The sequence spans 363 residues: tRNA-specific 2-thiouridylase MnmA (363 aa).

Residues 13–20 (GLSGGVDS) and Met39 contribute to the ATP site. The tract at residues 99–101 (NPD) is interaction with target base in tRNA. Catalysis depends on Cys104, which acts as the Nucleophile. Cysteines 104 and 200 form a disulfide. Gly128 contributes to the ATP binding site. An interaction with tRNA region spans residues 150 to 152 (KDQ). Cys200 serves as the catalytic Cysteine persulfide intermediate. The interval 310–311 (RY) is interaction with tRNA.

Belongs to the MnmA/TRMU family.

It is found in the cytoplasm. It catalyses the reaction S-sulfanyl-L-cysteinyl-[protein] + uridine(34) in tRNA + AH2 + ATP = 2-thiouridine(34) in tRNA + L-cysteinyl-[protein] + A + AMP + diphosphate + H(+). In terms of biological role, catalyzes the 2-thiolation of uridine at the wobble position (U34) of tRNA, leading to the formation of s(2)U34. In Ruthia magnifica subsp. Calyptogena magnifica, this protein is tRNA-specific 2-thiouridylase MnmA.